The sequence spans 424 residues: Serine--tRNA ligase (424 aa).

230 to 232 (TAE) lines the L-serine pocket. 261 to 263 (RSE) provides a ligand contact to ATP. An L-serine-binding site is contributed by Glu-284. Residue 348-351 (EISS) coordinates ATP. Ser-384 is a binding site for L-serine.

Belongs to the class-II aminoacyl-tRNA synthetase family. Type-1 seryl-tRNA synthetase subfamily. In terms of assembly, homodimer. The tRNA molecule binds across the dimer.

Its subcellular location is the cytoplasm. It carries out the reaction tRNA(Ser) + L-serine + ATP = L-seryl-tRNA(Ser) + AMP + diphosphate + H(+). The catalysed reaction is tRNA(Sec) + L-serine + ATP = L-seryl-tRNA(Sec) + AMP + diphosphate + H(+). It participates in aminoacyl-tRNA biosynthesis; selenocysteinyl-tRNA(Sec) biosynthesis; L-seryl-tRNA(Sec) from L-serine and tRNA(Sec): step 1/1. Catalyzes the attachment of serine to tRNA(Ser). Is also able to aminoacylate tRNA(Sec) with serine, to form the misacylated tRNA L-seryl-tRNA(Sec), which will be further converted into selenocysteinyl-tRNA(Sec). This chain is Serine--tRNA ligase, found in Streptococcus pneumoniae (strain Hungary19A-6).